A 386-amino-acid polypeptide reads, in one-letter code: MEKIKDQFANLHILRRSSEPKEPTYLLGIDTSKTVPAEKGGLVAVLCSNGSIRIYDKETLNLLREFSGSPGLLNGVRFANSCDNVYSASTDGTVKCWDARLASEKPAQLFKGYPSNIFISFDVNCKDHIICAGAEKVEDDALLVFWDARFTSQDLSTRDPLGAYSETHSDDITQVRFHPSNPNMVVSGSTDGLVNVFDLSVDNEEDALVATCNSVSSVSCIGWCGRDYKQIYCMTHDEGFCWWDLNHLDTDEPITCLNIQDVRDVTDVKEGHLDYLIGGLYHENMDRLFVIGGTNLGKIHLLSCTKTGLSHVTSLQGGHAATVRSFCWTVSEDSLLTGGEDAQLLLWKPGAVEKTFTKKDSLKIASSVQQRVRVHSSDSYKKRKQQ.

6 WD repeats span residues 21 to 65, 68 to 107, 112 to 156, 167 to 207, 213 to 253, and 318 to 357; these read KEPT…LLRE, GSPG…EKPA, GYPS…QDLS, THSD…EEDA, NSVS…TDEP, and GHAA…KTFT.

The polypeptide is WD repeat-containing protein 89 (Wdr89) (Rattus norvegicus (Rat)).